Consider the following 464-residue polypeptide: Divalent metal cation transporter MntH (464 aa).

A run of 11 helical transmembrane segments spans residues 57-77 (ILIA…AGGA), 82-102 (SLLS…SMAA), 125-145 (GIIL…AEII), 157-177 (IPLV…LLLM), 186-206 (AIVA…VFLA), 229-249 (MLYL…LYLG), 281-301 (LTIA…LFFG), 321-341 (IVGA…LLSS), 376-396 (LLSV…EAKI), 399-419 (LLTL…VPLV), and 443-463 (VATV…VGVI).

The protein belongs to the NRAMP family.

It is found in the cell membrane. H(+)-stimulated, divalent metal cation uptake system. The chain is Divalent metal cation transporter MntH from Levilactobacillus brevis (Lactobacillus brevis).